The chain runs to 673 residues: Auxin response factor 9 (673 aa).

The segment at residues 126-228 (FCKTLTASDT…ELRVGVRRLM (103 aa)) is a DNA-binding region (TF-B3). Disordered regions lie at residues 356 to 386 (ELEP…PSVV) and 514 to 545 (DSDQ…QSRQ). Polar residues predominate over residues 516–545 (DQISQPSNGNKSDAPGTSSERSPLESQSRQ). One can recognise a PB1 domain in the interval 547–639 (RSCTKVIMQG…EEAKLLAPKS (93 aa)).

It belongs to the ARF family. In terms of assembly, homodimers and heterodimers. In terms of tissue distribution, expressed in roots, culms, leaves and young panicles.

Its subcellular location is the nucleus. Its function is as follows. Auxin response factors (ARFs) are transcriptional factors that bind specifically to the DNA sequence 5'-TGTCTC-3' found in the auxin-responsive promoter elements (AuxREs). The polypeptide is Auxin response factor 9 (ARF9) (Oryza sativa subsp. japonica (Rice)).